The following is a 232-amino-acid chain: Orotidine 5'-phosphate decarboxylase (232 aa).

Substrate-binding positions include D13, K35, 62-71 (DLKFHDIPNT), T121, R182, Q191, G211, and R212. Residue K64 is the Proton donor of the active site.

The protein belongs to the OMP decarboxylase family. Type 1 subfamily. In terms of assembly, homodimer.

The enzyme catalyses orotidine 5'-phosphate + H(+) = UMP + CO2. It functions in the pathway pyrimidine metabolism; UMP biosynthesis via de novo pathway; UMP from orotate: step 2/2. In terms of biological role, catalyzes the decarboxylation of orotidine 5'-monophosphate (OMP) to uridine 5'-monophosphate (UMP). This chain is Orotidine 5'-phosphate decarboxylase, found in Teredinibacter turnerae (strain ATCC 39867 / T7901).